The following is a 75-amino-acid chain: Exodeoxyribonuclease 7 small subunit (75 aa).

This sequence belongs to the XseB family. In terms of assembly, heterooligomer composed of large and small subunits.

Its subcellular location is the cytoplasm. It catalyses the reaction Exonucleolytic cleavage in either 5'- to 3'- or 3'- to 5'-direction to yield nucleoside 5'-phosphates.. Bidirectionally degrades single-stranded DNA into large acid-insoluble oligonucleotides, which are then degraded further into small acid-soluble oligonucleotides. The polypeptide is Exodeoxyribonuclease 7 small subunit (Chlamydia caviae (strain ATCC VR-813 / DSM 19441 / 03DC25 / GPIC) (Chlamydophila caviae)).